Here is a 281-residue protein sequence, read N- to C-terminus: Glutamate racemase (281 aa).

Substrate is bound by residues 13-14 and 45-46; these read DS and YG. The active-site Proton donor/acceptor is C76. 77–78 contributes to the substrate binding site; that stretch reads NT. Catalysis depends on C185, which acts as the Proton donor/acceptor. Substrate is bound at residue 186 to 187; the sequence is TH.

It belongs to the aspartate/glutamate racemases family.

The catalysed reaction is L-glutamate = D-glutamate. It participates in cell wall biogenesis; peptidoglycan biosynthesis. Its function is as follows. Provides the (R)-glutamate required for cell wall biosynthesis. In Rippkaea orientalis (strain PCC 8801 / RF-1) (Cyanothece sp. (strain PCC 8801)), this protein is Glutamate racemase.